The sequence spans 439 residues: Histidine--tRNA ligase (439 aa).

The protein belongs to the class-II aminoacyl-tRNA synthetase family. Homodimer.

Its subcellular location is the cytoplasm. The catalysed reaction is tRNA(His) + L-histidine + ATP = L-histidyl-tRNA(His) + AMP + diphosphate + H(+). In Leptospira interrogans serogroup Icterohaemorrhagiae serovar Lai (strain 56601), this protein is Histidine--tRNA ligase (hisS).